A 508-amino-acid chain; its full sequence is Maturase K (508 aa).

Belongs to the intron maturase 2 family. MatK subfamily.

It is found in the plastid. Its subcellular location is the chloroplast. Usually encoded in the trnK tRNA gene intron. Probably assists in splicing its own and other chloroplast group II introns. This is Maturase K from Chaetosphaeridium globosum (Charophycean green alga).